The following is a 395-amino-acid chain: Zinc-regulated GTPase metalloprotein activator 1B (395 aa).

The segment at 1–36 is disordered; that stretch reads MLPAVGSADEEEDPAEEDCPELVPMETTQSEEEEKS. The segment covering 8–20 has biased composition (acidic residues); sequence ADEEEDPAEEDCP. The psi-PxLVp motif motif lies at 17–24; it reads EDCPELVP. 49–56 serves as a coordination point for GTP; sequence GYLGAGKT. Residues Cys-107, Cys-109, and Cys-110 each contribute to the Zn(2+) site. A CXCC motif motif is present at residues 107-110; it reads CLCC. GTP is bound by residues 110–114 and 203–206; these read CSVKD and NKTD. One can recognise a CobW C-terminal domain in the interval 274 to 377; the sequence is IVTITFEVPG…ILKQLFIATV (104 aa).

It belongs to the SIMIBI class G3E GTPase family. ZNG1 subfamily.

Its subcellular location is the nucleus. It catalyses the reaction GTP + H2O = GDP + phosphate + H(+). Its function is as follows. Zinc chaperone that directly transfers zinc cofactor to target metalloproteins, thereby activating them. Catalyzes zinc insertion into the active site of methionine aminopeptidase METAP1, which function to cleave the initiator methionine from polypeptides during or after protein translation. Mechanistically, the N-terminal psi-PxLVp motif binds to the C6H2-type zinc finger of inactive form of METAP1. After formation of the docked complex, zinc is transferred from the CXCC motif in the GTPase domain of ZNG1B to the zinc binding site in the peptidase domain of METAP1 in a process requiring GTP hydrolysis. GTP/GDP exchange is required for release of active METAP1. In Homo sapiens (Human), this protein is Zinc-regulated GTPase metalloprotein activator 1B.